We begin with the raw amino-acid sequence, 134 residues long: Small ribosomal subunit protein uS12 (134 aa).

Positions 1-26 (MPTTQQLLRKGRTTLQKKSKVPALKG) are disordered. The segment covering 9-20 (RKGRTTLQKKSK) has biased composition (basic residues). At aspartate 89 the chain carries 3-methylthioaspartic acid. A disordered region spans residues 103–134 (DTQGVKDRNKSRSKYGTKKPKAGAAAAGAKKK). Basic residues predominate over residues 113-123 (SRSKYGTKKPK). Residues 124–134 (AGAAAAGAKKK) show a composition bias toward low complexity.

It belongs to the universal ribosomal protein uS12 family. As to quaternary structure, part of the 30S ribosomal subunit. Contacts proteins S8 and S17. May interact with IF1 in the 30S initiation complex.

Functionally, with S4 and S5 plays an important role in translational accuracy. In terms of biological role, interacts with and stabilizes bases of the 16S rRNA that are involved in tRNA selection in the A site and with the mRNA backbone. Located at the interface of the 30S and 50S subunits, it traverses the body of the 30S subunit contacting proteins on the other side and probably holding the rRNA structure together. The combined cluster of proteins S8, S12 and S17 appears to hold together the shoulder and platform of the 30S subunit. This chain is Small ribosomal subunit protein uS12, found in Deinococcus geothermalis (strain DSM 11300 / CIP 105573 / AG-3a).